Consider the following 761-residue polypeptide: Prolyl oligopeptidase A (761 aa).

Catalysis depends on charge relay system residues Ser-606, Asp-690, and His-726.

The protein belongs to the peptidase S9A family. Monomer.

The enzyme catalyses Hydrolysis of Pro-|-Xaa &gt;&gt; Ala-|-Xaa in oligopeptides.. Housekeeping prolyl oligopeptidase (POP) that behaves like a conventional POP by cleaving peptide bonds on the C-terminal side of prolyl residues within peptides that are up to approximately 30 amino acids long. In Amanita bisporigera (Destroying angel), this protein is Prolyl oligopeptidase A.